The chain runs to 429 residues: Adenylosuccinate synthetase (429 aa).

Residues 12 to 18 (GDEGKGK) and 40 to 42 (GHT) contribute to the GTP site. The Proton acceptor role is filled by Asp13. Mg(2+)-binding residues include Asp13 and Gly40. IMP contacts are provided by residues 13 to 16 (DEGK), 38 to 41 (NAGH), Thr128, Arg142, Gln223, Thr238, and Arg302. Residue His41 is the Proton donor of the active site. A substrate-binding site is contributed by 298–304 (ATTGRKR). GTP-binding positions include Arg304, 330 to 332 (KLD), and 412 to 414 (GTG).

It belongs to the adenylosuccinate synthetase family. Homodimer. It depends on Mg(2+) as a cofactor.

It is found in the cytoplasm. The enzyme catalyses IMP + L-aspartate + GTP = N(6)-(1,2-dicarboxyethyl)-AMP + GDP + phosphate + 2 H(+). Its pathway is purine metabolism; AMP biosynthesis via de novo pathway; AMP from IMP: step 1/2. Plays an important role in the de novo pathway of purine nucleotide biosynthesis. Catalyzes the first committed step in the biosynthesis of AMP from IMP. In Tropheryma whipplei (strain TW08/27) (Whipple's bacillus), this protein is Adenylosuccinate synthetase.